We begin with the raw amino-acid sequence, 475 residues long: Isocitrate dehydrogenase [NADP] (475 aa).

Residue threonine 104 coordinates NADP(+). Residues serine 113, asparagine 115, arginine 119, arginine 129, and arginine 153 each contribute to the D-threo-isocitrate site. Aspartate 362 contributes to the Mg(2+) binding site. Residues 394–400, asparagine 407, tyrosine 446, and arginine 450 contribute to the NADP(+) site; that span reads HGTAPKH.

The protein belongs to the isocitrate and isopropylmalate dehydrogenases family. As to quaternary structure, homodimer. Mg(2+) serves as cofactor. It depends on Mn(2+) as a cofactor.

It is found in the cytoplasm. The catalysed reaction is D-threo-isocitrate + NADP(+) = 2-oxoglutarate + CO2 + NADPH. Inhibited non-competitively by ADP and 2-oxoglutarate, with respect to isocitrate and in a competitive manner by NADPH. In terms of biological role, catalyzes the oxidative decarboxylation of isocitrate to 2-oxoglutarate and carbon dioxide with the concomitant reduction of NADP(+). Is specific for NADP(+), cannot use NAD(+). This Synechocystis sp. (strain ATCC 27184 / PCC 6803 / Kazusa) protein is Isocitrate dehydrogenase [NADP].